We begin with the raw amino-acid sequence, 516 residues long: Flavin-dependent halogenase armH2 (516 aa).

Residues glycine 16, alanine 19, and glutamate 49 each contribute to the FAD site. Positions 328 and 329 each coordinate chloride. Isoleucine 330 contacts FAD. The disordered stretch occupies residues 440–475 (PQANGNGAAKQDAVPAPIPVALSSGAGPEKDAKRRE).

It belongs to the flavin-dependent halogenase family.

The enzyme catalyses melleolide F + FADH2 + chloride + O2 = 6'-chloromelleolide F + FAD + 2 H2O + H(+). Flavin-dependent halogenase involved in the biosynthesis of melleolides, a range of antifungal and phytotoxic polyketide derivatives composed of an orsellinic acid (OA) moiety esterified to various sesquiterpene alcohols. The halogenase catalyzes the transfer of a single chlorine atom to the melleolide backbone, resulting in a 6'-chloromelleolide product. The enzyme acts on free substrate and does not depend on carrier-protein-dependent acceptor molecules. In Armillaria mellea (Honey mushroom), this protein is Flavin-dependent halogenase armH2.